The sequence spans 477 residues: Aspartyl/glutamyl-tRNA(Asn/Gln) amidotransferase subunit B (477 aa).

The protein belongs to the GatB/GatE family. GatB subfamily. Heterotrimer of A, B and C subunits.

It catalyses the reaction L-glutamyl-tRNA(Gln) + L-glutamine + ATP + H2O = L-glutaminyl-tRNA(Gln) + L-glutamate + ADP + phosphate + H(+). The enzyme catalyses L-aspartyl-tRNA(Asn) + L-glutamine + ATP + H2O = L-asparaginyl-tRNA(Asn) + L-glutamate + ADP + phosphate + 2 H(+). Its function is as follows. Allows the formation of correctly charged Asn-tRNA(Asn) or Gln-tRNA(Gln) through the transamidation of misacylated Asp-tRNA(Asn) or Glu-tRNA(Gln) in organisms which lack either or both of asparaginyl-tRNA or glutaminyl-tRNA synthetases. The reaction takes place in the presence of glutamine and ATP through an activated phospho-Asp-tRNA(Asn) or phospho-Glu-tRNA(Gln). The protein is Aspartyl/glutamyl-tRNA(Asn/Gln) amidotransferase subunit B of Nitrosococcus oceani (strain ATCC 19707 / BCRC 17464 / JCM 30415 / NCIMB 11848 / C-107).